The sequence spans 792 residues: Cis-abienol synthase, chloroplastic (792 aa).

A chloroplast-targeting transit peptide spans Met-1–Arg-37. Asp-539, Asp-543, Asn-684, and Glu-692 together coordinate Mg(2+). The short motif at Asp-539 to Asp-543 is the DDXXD motif element.

This sequence belongs to the terpene synthase family. The cofactor is Mg(2+). In terms of tissue distribution, expressed specifically in trichomes.

The protein localises to the plastid. Its subcellular location is the chloroplast. It catalyses the reaction 8-hydroxycopalyl diphosphate = cis-abienol + diphosphate. The protein operates within secondary metabolite biosynthesis; terpenoid biosynthesis. Involved in the biosynthesis of cis-abienol, a labdane diterpene that can be used as synthesis precursor of ambergris substitution fragance products. The protein is Cis-abienol synthase, chloroplastic of Nicotiana tabacum (Common tobacco).